Here is a 401-residue protein sequence, read N- to C-terminus: L-rhamnonate dehydratase (401 aa).

Positions 29 and 55 each coordinate substrate. The Mg(2+) site is built by Asp222, Glu248, and Glu276. The active-site Proton acceptor is the His325. Glu345 provides a ligand contact to substrate.

The protein belongs to the mandelate racemase/muconate lactonizing enzyme family. RhamD subfamily. As to quaternary structure, homooctamer; tetramer of dimers. It depends on Mg(2+) as a cofactor.

The catalysed reaction is L-rhamnonate = 2-dehydro-3-deoxy-L-rhamnonate + H2O. Functionally, catalyzes the dehydration of L-rhamnonate to 2-keto-3-deoxy-L-rhamnonate (KDR). This chain is L-rhamnonate dehydratase, found in Salmonella heidelberg (strain SL476).